A 493-amino-acid polypeptide reads, in one-letter code: Cardiolipin synthase 1 (493 aa).

The next 2 helical transmembrane spans lie at 13 to 33 (FTII…IIIF) and 45 to 65 (WAWL…YLFF). PLD phosphodiesterase domains are found at residues 228-255 (MNNR…GDEY) and 406-433 (ENGF…DFRS). Catalysis depends on residues His-233, Lys-235, Asp-240, His-411, Lys-413, and Asp-418.

The protein belongs to the phospholipase D family. Cardiolipin synthase subfamily.

The protein resides in the cell membrane. It catalyses the reaction 2 a 1,2-diacyl-sn-glycero-3-phospho-(1'-sn-glycerol) = a cardiolipin + glycerol. Its function is as follows. Catalyzes the reversible phosphatidyl group transfer from one phosphatidylglycerol molecule to another to form cardiolipin (CL) (diphosphatidylglycerol) and glycerol. This chain is Cardiolipin synthase 1 (cls1), found in Staphylococcus aureus (strain COL).